Consider the following 330-residue polypeptide: Beta-ketoacyl-[acyl-carrier-protein] synthase III (330 aa).

Residues Cys115 and His255 contribute to the active site. The interval 256–260 is ACP-binding; sequence QANVR. Asn285 is a catalytic residue.

This sequence belongs to the thiolase-like superfamily. FabH family. Homodimer.

The protein localises to the cytoplasm. The enzyme catalyses malonyl-[ACP] + acetyl-CoA + H(+) = 3-oxobutanoyl-[ACP] + CO2 + CoA. It functions in the pathway lipid metabolism; fatty acid biosynthesis. Functionally, catalyzes the condensation reaction of fatty acid synthesis by the addition to an acyl acceptor of two carbons from malonyl-ACP. Catalyzes the first condensation reaction which initiates fatty acid synthesis and may therefore play a role in governing the total rate of fatty acid production. Possesses both acetoacetyl-ACP synthase and acetyl transacylase activities. Its substrate specificity determines the biosynthesis of branched-chain and/or straight-chain of fatty acids. The protein is Beta-ketoacyl-[acyl-carrier-protein] synthase III of Symbiobacterium thermophilum (strain DSM 24528 / JCM 14929 / IAM 14863 / T).